Reading from the N-terminus, the 341-residue chain is Oxidoreductase swnN (341 aa).

It belongs to the NmrA-type oxidoreductase family. Isoflavone reductase subfamily.

It participates in mycotoxin biosynthesis. In terms of biological role, oxidoreductase; part of the gene cluster that mediates the biosynthesis of swainsonine (SW), a cytotoxic fungal alkaloid and a potential cancer therapy drug. Swainsonine production occurs via a multibranched pathway and is dispensable for fungal colonization of plants and infection of insect hosts. The first step of swainsonine biosynthesis is the production of the precursor pipecolic acid (PA) via conversion of L-lysine (Lys) to 1-piperideine-6-carboxylate (P6C) by the aminotransferase swnA, the latter being further reduced to PA by the reductase swnR. PA can be converted from lysine by both the SW biosynthetic cluster and the unclustered genes such as lysine cyclodeaminase. The PKS-NRPS hybrid synthetase swnK uptakes and condensates PA and malonyl-CoA with and without skipping of the ketoreductase (KR) domain in order to produce 3 intermediates, 1-oxoindolizidine, (1S)-1-hydroxyindolizin, and (1R)-1-hydroxyindolizine; with the transisomer (1S)-1-hydroxyindolizin being predominant. The terminal thioester reductase (TE) domain of swnK is involved in reduction of the thioester bond to release the intermediate aldehydes. The oxidoreductase swnN could contribute to the reduction of 1-oxoindolizidine to (1S)-1-hydroxyindolizin and (1R)-1-hydroxyindolizine, contributing to the major route of SW production. The dioxygenase swnH2 would be responsible for the oxidization of (1R)-1-hydroxyindolizine into (1R,2S)-1,2-dihydroxyindolizine and of (1S)-1-hydroxyindolizin to yield both (1R,2S)-1,2-dihydroxyindolizine and (1S,2S)-1,2-dihydroxyindolizine. The dioxygenase swnH1 then performs the conversion of the 1,2-dihydroxyindolizine epimers to SW. This Metarhizium robertsii (strain ARSEF 23 / ATCC MYA-3075) (Metarhizium anisopliae (strain ARSEF 23)) protein is Oxidoreductase swnN.